Here is a 1397-residue protein sequence, read N- to C-terminus: DNA-directed RNA polymerase subunit beta' (1397 aa).

Zn(2+) contacts are provided by cysteine 71, cysteine 73, cysteine 86, and cysteine 89. Mg(2+)-binding residues include aspartate 462, aspartate 464, and aspartate 466. Positions 811, 885, 892, and 895 each coordinate Zn(2+). The interval 1368–1397 is disordered; sequence QNRDDKILEDQGGATPTASTEIKEPAEGAA. Positions 1388-1397 are enriched in basic and acidic residues; that stretch reads EIKEPAEGAA.

It belongs to the RNA polymerase beta' chain family. In terms of assembly, the RNAP catalytic core consists of 2 alpha, 1 beta, 1 beta' and 1 omega subunit. When a sigma factor is associated with the core the holoenzyme is formed, which can initiate transcription. Mg(2+) serves as cofactor. It depends on Zn(2+) as a cofactor.

It carries out the reaction RNA(n) + a ribonucleoside 5'-triphosphate = RNA(n+1) + diphosphate. Its function is as follows. DNA-dependent RNA polymerase catalyzes the transcription of DNA into RNA using the four ribonucleoside triphosphates as substrates. The sequence is that of DNA-directed RNA polymerase subunit beta' from Parvibaculum lavamentivorans (strain DS-1 / DSM 13023 / NCIMB 13966).